We begin with the raw amino-acid sequence, 382 residues long: Dual-specificity RNA methyltransferase RlmN (382 aa).

The active-site Proton acceptor is glutamate 91. The region spanning glutamate 97–aspartate 339 is the Radical SAM core domain. Cysteine 104 and cysteine 344 are oxidised to a cystine. [4Fe-4S] cluster is bound by residues cysteine 111, cysteine 115, and cysteine 118. Residues glycine 165–glutamate 166, serine 197, serine 219–histidine 221, and asparagine 301 each bind S-adenosyl-L-methionine. Cysteine 344 serves as the catalytic S-methylcysteine intermediate.

It belongs to the radical SAM superfamily. RlmN family. The cofactor is [4Fe-4S] cluster.

The protein localises to the cytoplasm. The catalysed reaction is adenosine(2503) in 23S rRNA + 2 reduced [2Fe-2S]-[ferredoxin] + 2 S-adenosyl-L-methionine = 2-methyladenosine(2503) in 23S rRNA + 5'-deoxyadenosine + L-methionine + 2 oxidized [2Fe-2S]-[ferredoxin] + S-adenosyl-L-homocysteine. It catalyses the reaction adenosine(37) in tRNA + 2 reduced [2Fe-2S]-[ferredoxin] + 2 S-adenosyl-L-methionine = 2-methyladenosine(37) in tRNA + 5'-deoxyadenosine + L-methionine + 2 oxidized [2Fe-2S]-[ferredoxin] + S-adenosyl-L-homocysteine. Functionally, specifically methylates position 2 of adenine 2503 in 23S rRNA and position 2 of adenine 37 in tRNAs. m2A2503 modification seems to play a crucial role in the proofreading step occurring at the peptidyl transferase center and thus would serve to optimize ribosomal fidelity. The polypeptide is Dual-specificity RNA methyltransferase RlmN (Albidiferax ferrireducens (strain ATCC BAA-621 / DSM 15236 / T118) (Rhodoferax ferrireducens)).